We begin with the raw amino-acid sequence, 295 residues long: Cytidine deaminase (295 aa).

2 consecutive CMP/dCMP-type deaminase domains span residues 48-168 and 187-295; these read EDAD…FGPA and DDDE…YLSL. Residue 89 to 91 coordinates substrate; that stretch reads NME. His-102 provides a ligand contact to Zn(2+). Glu-104 serves as the catalytic Proton donor. The Zn(2+) site is built by Cys-129 and Cys-132.

Belongs to the cytidine and deoxycytidylate deaminase family. In terms of assembly, homodimer. Zn(2+) serves as cofactor.

The catalysed reaction is cytidine + H2O + H(+) = uridine + NH4(+). The enzyme catalyses 2'-deoxycytidine + H2O + H(+) = 2'-deoxyuridine + NH4(+). Functionally, this enzyme scavenges exogenous and endogenous cytidine and 2'-deoxycytidine for UMP synthesis. The sequence is that of Cytidine deaminase from Vibrio cholerae serotype O1 (strain ATCC 39315 / El Tor Inaba N16961).